The primary structure comprises 565 residues: MTTKLERLIDQGVGRIPADIVLKGGSFFDLVTGEIVRSDIAIGADRIVGTSGDYRGETEIDISGRTVVPGFIDTHLHIESSLVTPHEFDRCVLPYGVTTAICDPHEIANVLGTEGIEFFLESALETIMDIRVQLSSCVPATHLETAGADLPIERLLPFRDHPKVIGLAEFMNFPGVIHKDSVCMAKLDAFQGGHIDGHAPLLSGNDLNGYLSAGIRTEHECTSAAEALEKIRKGMHILVREGSVSKDLAALIPIITERLSPYLALCTDDRNPLDIAEQGHLDHMIRTAMASGVEPLAIYRAASISAARAFGLRDRGLVAPGWRADLVVLDSLQSCRAEMVFSAGRRVSDALFATRKPVAPIGLDSVKARPVNAAHFGVPVAEGETSVIGVMPGKIITEHRRYRLPAKGNETTVDLTNDIIKVAVIERHGKNGNHANGFVQGFGLKKGAIASTVGHDSHNICVVGVNEDDMAYAANRLGEIKGGFVVVEDGKITGEIALPVAGLMSIEPYETVRDTLHHLRQAALALGATLHEPFLQLAFLPLPVIPHLKISDRGMVDVDKFALIG.

Belongs to the metallo-dependent hydrolases superfamily. Adenine deaminase family. It depends on Mn(2+) as a cofactor.

It catalyses the reaction adenine + H2O + H(+) = hypoxanthine + NH4(+). This Rhizobium etli (strain ATCC 51251 / DSM 11541 / JCM 21823 / NBRC 15573 / CFN 42) protein is Adenine deaminase 1.